We begin with the raw amino-acid sequence, 1402 residues long: Roundabout homolog 3 (1402 aa).

The N-terminal stretch at 1 to 20 (MLRYLLKTLLQMNLFADSLA) is a signal peptide. The Extracellular portion of the chain corresponds to 21–891 (RDISNSSELL…ERLAKVLRKP (871 aa)). 3 N-linked (GlcNAc...) asparagine glycosylation sites follow: asparagine 25, asparagine 34, and asparagine 53. Ig-like C2-type domains lie at 64 to 160 (PRIV…ASLE), 166 to 253 (DDFR…AELV), 258 to 342 (PSFL…GSLS), 347 to 440 (PQFV…ALLE), and 450 to 531 (PPII…GEAT). Cysteine 85 and cysteine 143 are disulfide-bonded. The N-linked (GlcNAc...) asparagine glycan is linked to asparagine 156. Intrachain disulfides connect cysteine 187–cysteine 236 and cysteine 279–cysteine 326. Residues asparagine 355, asparagine 363, asparagine 410, asparagine 459, and asparagine 503 are each glycosylated (N-linked (GlcNAc...) asparagine). Cysteine 368 and cysteine 424 are joined by a disulfide. A disulfide bond links cysteine 472 and cysteine 521. Disordered regions lie at residues 540-561 (EDWGASPGPATGPSNPPGPPSQ) and 639-662 (EPSPVSEPVQTQDSSLSRPAEDPW). Over residues 543-552 (GASPGPATGP) the composition is skewed to low complexity. Fibronectin type-III domains lie at 558–652 (PPSQ…TQDS), 672–766 (AVRM…IPEE), and 771–869 (PPQG…FPPA). Residues 646-655 (PVQTQDSSLS) show a composition bias toward polar residues. Residues asparagine 784, asparagine 813, and asparagine 820 are each glycosylated (N-linked (GlcNAc...) asparagine). A helical membrane pass occupies residues 892–912 (AFLAGSSAACGALLLGFCAAL). At 913–1402 (YRRQKQRKEL…PGRNRREEPR (490 aa)) the chain is on the cytoplasmic side. 3 disordered regions span residues 965–989 (SWPHPPRSPSAQEPRGSCCPSNPDP), 1032–1307 (FHGG…VVQA), and 1340–1402 (GRPS…EEPR). Composition is skewed to polar residues over residues 1038–1049 (QHSSGDPSTWSQ) and 1142–1152 (PSPTSSYGQQS). Over residues 1158–1169 (PSPPDPPQPPTD) the composition is skewed to pro residues. Low complexity-rich tracts occupy residues 1178–1191 (RRVPLGPSSPLSVS) and 1215–1228 (ASPSPVPSTASSAP). Basic residues predominate over residues 1243–1254 (HGHRARIRKKPK). Serine 1263 is modified (phosphoserine). The segment covering 1294–1304 (LERERSGERRV) has biased composition (basic and acidic residues). The span at 1346 to 1357 (SHGQGTSTCSTA) shows a compositional bias: polar residues. Residues 1358-1371 (GSNSSRGSNSSRGS) are compositionally biased toward low complexity.

It belongs to the immunoglobulin superfamily. ROBO family. Interacts (via Fibronectin type-III 1 domain) with NELL2 (via the EGF domains) with a 3:3 stoichiometry; this interaction promotes oligomerization of ROBO3 resulting in the repulsion of commissural axons in the midline. In terms of tissue distribution, detected in embryonal spinal cord and hindbrain.

Its subcellular location is the membrane. In terms of biological role, receptor involved in axon guidance during development. Acts as a multifunctional regulator of pathfinding that simultaneously mediates NELL2 repulsion, inhibits SLIT repulsion, and facilitates Netrin-1/NTN1 attraction. In spinal cord development plays a role in guiding commissural axons probably by preventing premature sensitivity to Slit proteins thus inhibiting Slit signaling through ROBO1/ROBO2. Binding OF NELL2 to the receptor ROBO3 promotes oligomerization of ROBO3, resulting in the repulsion of commissural axons in the midline. ROBO3 also indirectly boosts axon attraction to NTN1 without interacting with NTN1 itself. Functionally, mediates NELL2 premature repulsion of commissural axons during midline crossing. Its function is as follows. After midline crossing by the commissural axons, may, in concert with ROBO1 and ROBO2, prevent midline recrossing. Does not mediate NELL2 signaling. The polypeptide is Roundabout homolog 3 (Mus musculus (Mouse)).